Consider the following 241-residue polypeptide: Large ribosomal subunit protein uL3 (241 aa).

2 disordered regions span residues 140–162 and 217–241; these read SHRSIGSTGGRQDPGKTFKNKKM and PLPGKFRENGASAPATEAPAAEETA. N5-methylglutamine is present on Gln151. Residues 229 to 241 are compositionally biased toward low complexity; that stretch reads APATEAPAAEETA.

The protein belongs to the universal ribosomal protein uL3 family. As to quaternary structure, part of the 50S ribosomal subunit. Forms a cluster with proteins L14 and L19. Methylated by PrmB.

Functionally, one of the primary rRNA binding proteins, it binds directly near the 3'-end of the 23S rRNA, where it nucleates assembly of the 50S subunit. The chain is Large ribosomal subunit protein uL3 from Methylobacterium radiotolerans (strain ATCC 27329 / DSM 1819 / JCM 2831 / NBRC 15690 / NCIMB 10815 / 0-1).